The chain runs to 315 residues: Homoserine O-succinyltransferase (315 aa).

The active-site Acyl-thioester intermediate is Cys142. Lys163 and Ser192 together coordinate substrate. The active-site Proton acceptor is the His235. Glu237 is an active-site residue. Arg249 lines the substrate pocket.

Belongs to the MetA family.

It is found in the cytoplasm. It catalyses the reaction L-homoserine + succinyl-CoA = O-succinyl-L-homoserine + CoA. The protein operates within amino-acid biosynthesis; L-methionine biosynthesis via de novo pathway; O-succinyl-L-homoserine from L-homoserine: step 1/1. In terms of biological role, transfers a succinyl group from succinyl-CoA to L-homoserine, forming succinyl-L-homoserine. This chain is Homoserine O-succinyltransferase, found in Shewanella piezotolerans (strain WP3 / JCM 13877).